Here is a 358-residue protein sequence, read N- to C-terminus: Peptide chain release factor 1 (358 aa).

Q233 carries the N5-methylglutamine modification.

Belongs to the prokaryotic/mitochondrial release factor family. Methylated by PrmC. Methylation increases the termination efficiency of RF1.

Its subcellular location is the cytoplasm. Peptide chain release factor 1 directs the termination of translation in response to the peptide chain termination codons UAG and UAA. This chain is Peptide chain release factor 1, found in Staphylococcus aureus (strain MSSA476).